We begin with the raw amino-acid sequence, 971 residues long: Kinesin-like protein KIN-14C (971 aa).

The Calponin-homology (CH) domain occupies 14 to 119 (ANRRAEVIDW…CLLALKDNVA (106 aa)). Residues 272 to 357 (IKALETLVNG…QMETKARQME (86 aa)) adopt a coiled-coil conformation. A Kinesin motor domain is found at 472–799 (NIRVYCRVRP…LKFAERVSGV (328 aa)). An ATP-binding site is contributed by 556-563 (GQTGSGKT). Residues 809-844 (EGKDIKELLEQVASLKDTIARKDMEIEQLQLLKSKS) are a coiled coil. Polar residues predominate over residues 839–881 (LLKSKSPNSMTDRNGSNLLRQSTSSTGLSSLPVASQQNQQLSG). A disordered region spans residues 839–971 (LLKSKSPNSM…GSLAKPSKRR (133 aa)).

This sequence belongs to the TRAFAC class myosin-kinesin ATPase superfamily. Kinesin family. KIN-14 subfamily.

The sequence is that of Kinesin-like protein KIN-14C from Oryza sativa subsp. japonica (Rice).